The chain runs to 153 residues: MRRIVATGTFDLLHPGHLFYLQESKKLGDELYVIVARDRNVKHKPRPIIPEEQRLQMVAALKPVDHALLGDTTDMFRPIEAIRPDVITLGFNQNFDPAVLTEALKARSLSAEVVRIGGYGDRVLCSSRRIVQRVIETRGPSLRVGQNTDPEDL.

ATP is bound by residues 9–10 (TF), 14–17 (HPGH), N92, and Y119.

This sequence belongs to the archaeal FAD synthase family. In terms of assembly, homodimer. Requires a divalent metal cation as cofactor.

The enzyme catalyses FMN + ATP + H(+) = FAD + diphosphate. It participates in cofactor biosynthesis; FAD biosynthesis; FAD from FMN: step 1/1. Functionally, catalyzes the transfer of the AMP portion of ATP to flavin mononucleotide (FMN) to produce flavin adenine dinucleotide (FAD) coenzyme. The sequence is that of FAD synthase from Methanosphaerula palustris (strain ATCC BAA-1556 / DSM 19958 / E1-9c).